A 47-amino-acid polypeptide reads, in one-letter code: PhoP/PhoQ regulator MgrB (47 aa).

The chain crosses the membrane as a helical span at residues 6–26 (WVVLGIVVVVCLLLWAQVFNI).

It belongs to the MgrB family. In terms of assembly, may form homooligomers. Probably interacts with the periplasmic domain of PhoQ.

Its subcellular location is the cell inner membrane. Its function is as follows. PhoP-regulated transcription is redox-sensitive, being activated when the periplasm becomes more reducing. MgrB acts between DsbA/DsbB and PhoP/PhoQ in this pathway. Represses PhoP/PhoQ signaling, possibly by binding to the periplasmic domain of PhoQ, altering its activity and that of downstream effector PhoP. The protein is PhoP/PhoQ regulator MgrB of Salmonella agona (strain SL483).